Reading from the N-terminus, the 569-residue chain is Urease subunit beta (569 aa).

The 439-residue stretch at 131 to 569 folds into the Urease domain; the sequence is GGIDTHIHFI…VSLGQLYCLF (439 aa). Ni(2+)-binding residues include histidine 136, histidine 138, and lysine 219. Lysine 219 is modified (N6-carboxylysine). Residue histidine 221 coordinates substrate. Ni(2+) is bound by residues histidine 248 and histidine 274. The Proton donor role is filled by histidine 322. Aspartate 362 lines the Ni(2+) pocket.

This sequence belongs to the metallo-dependent hydrolases superfamily. Urease alpha subunit family. As to quaternary structure, heterohexamer of 3 UreA (alpha) and 3 UreB (beta) subunits. It depends on Ni cation as a cofactor. Post-translationally, carboxylation allows a single lysine to coordinate two nickel ions.

It localises to the cytoplasm. It carries out the reaction urea + 2 H2O + H(+) = hydrogencarbonate + 2 NH4(+). The protein operates within nitrogen metabolism; urea degradation; CO(2) and NH(3) from urea (urease route): step 1/1. In Helicobacter hepaticus (strain ATCC 51449 / 3B1), this protein is Urease subunit beta.